The sequence spans 146 residues: Hemoglobin subunit beta (146 aa).

A Globin domain is found at 2 to 146 (QWTAEEKQLI…VAHALARKYH (145 aa)). Heme b contacts are provided by His63 and His92.

The protein belongs to the globin family. As to quaternary structure, heterotetramer of two alpha chains and two beta chains. As to expression, red blood cells.

Functionally, involved in oxygen transport from the lung to the various peripheral tissues. This chain is Hemoglobin subunit beta (HBB), found in Sturnus vulgaris (Starling).